The primary structure comprises 111 residues: ATP-dependent Clp protease adapter protein ClpS (111 aa).

Belongs to the ClpS family. As to quaternary structure, binds to the N-terminal domain of the chaperone ClpA.

Involved in the modulation of the specificity of the ClpAP-mediated ATP-dependent protein degradation. This Leptospira interrogans serogroup Icterohaemorrhagiae serovar copenhageni (strain Fiocruz L1-130) protein is ATP-dependent Clp protease adapter protein ClpS.